We begin with the raw amino-acid sequence, 370 residues long: Probable dual-specificity RNA methyltransferase RlmN (370 aa).

E91 serves as the catalytic Proton acceptor. Residues 97–329 enclose the Radical SAM core domain; it reads QHYGLSVCVT…KKNGVNCVVR (233 aa). Cysteines 104 and 340 form a disulfide. [4Fe-4S] cluster is bound by residues C111, C115, and C118. S-adenosyl-L-methionine contacts are provided by residues 163 to 164, S195, 218 to 220, and N296; these read GE and SLH. The active-site S-methylcysteine intermediate is C340.

It belongs to the radical SAM superfamily. RlmN family. It depends on [4Fe-4S] cluster as a cofactor.

The protein localises to the cytoplasm. The catalysed reaction is adenosine(2503) in 23S rRNA + 2 reduced [2Fe-2S]-[ferredoxin] + 2 S-adenosyl-L-methionine = 2-methyladenosine(2503) in 23S rRNA + 5'-deoxyadenosine + L-methionine + 2 oxidized [2Fe-2S]-[ferredoxin] + S-adenosyl-L-homocysteine. It carries out the reaction adenosine(37) in tRNA + 2 reduced [2Fe-2S]-[ferredoxin] + 2 S-adenosyl-L-methionine = 2-methyladenosine(37) in tRNA + 5'-deoxyadenosine + L-methionine + 2 oxidized [2Fe-2S]-[ferredoxin] + S-adenosyl-L-homocysteine. Specifically methylates position 2 of adenine 2503 in 23S rRNA and position 2 of adenine 37 in tRNAs. The protein is Probable dual-specificity RNA methyltransferase RlmN of Streptococcus suis (strain 98HAH33).